A 94-amino-acid polypeptide reads, in one-letter code: DNA-directed RNA polymerase subunit omega (94 aa).

It belongs to the RNA polymerase subunit omega family. As to quaternary structure, the RNAP catalytic core consists of 2 alpha, 1 beta, 1 beta' and 1 omega subunit. When a sigma factor is associated with the core the holoenzyme is formed, which can initiate transcription.

The enzyme catalyses RNA(n) + a ribonucleoside 5'-triphosphate = RNA(n+1) + diphosphate. Functionally, promotes RNA polymerase assembly. Latches the N- and C-terminal regions of the beta' subunit thereby facilitating its interaction with the beta and alpha subunits. The polypeptide is DNA-directed RNA polymerase subunit omega (Frankia alni (strain DSM 45986 / CECT 9034 / ACN14a)).